We begin with the raw amino-acid sequence, 168 residues long: Alpha-N-acetylgalactosamine-specific lectin (168 aa).

The N-terminal stretch at 1–18 is a signal peptide; that stretch reads MAFFRALCFVLLVGFAAA. Residues 38–163 enclose the C-type lectin domain; it reads YNGNCYRYFG…CSRAFAYVCK (126 aa). 2 disulfides stabilise this stretch: Cys-59–Cys-162 and Cys-136–Cys-154.

In terms of assembly, monomer, homodimer and homooligomer.

In terms of biological role, alpha-N-acetylgalactosamine-specific lectin. The oligomeric form has Ca(2+)-dependent hemagglutination activity towards sheep erythrocytes. Its hemagglutination activity is inhibited by various monosaccharides, oligosaccharides and glycopeptides, including inhibition by GalNAc, blood group A trisaccharide, Tn antigen, mucin and asialomucin. The protein is Alpha-N-acetylgalactosamine-specific lectin of Patiria pectinifera (Starfish).